We begin with the raw amino-acid sequence, 248 residues long: UDP-2,3-diacylglucosamine hydrolase (248 aa).

Residues D8, H10, D41, N79, and H114 each coordinate Mn(2+). Position 79 to 80 (79 to 80) interacts with substrate; the sequence is NR. The substrate site is built by D122, N164, R167, and H195. Mn(2+) is bound by residues H195 and H197.

It belongs to the LpxH family. Mn(2+) serves as cofactor.

Its subcellular location is the cell inner membrane. The enzyme catalyses UDP-2-N,3-O-bis[(3R)-3-hydroxytetradecanoyl]-alpha-D-glucosamine + H2O = 2-N,3-O-bis[(3R)-3-hydroxytetradecanoyl]-alpha-D-glucosaminyl 1-phosphate + UMP + 2 H(+). The protein operates within glycolipid biosynthesis; lipid IV(A) biosynthesis; lipid IV(A) from (3R)-3-hydroxytetradecanoyl-[acyl-carrier-protein] and UDP-N-acetyl-alpha-D-glucosamine: step 4/6. Its function is as follows. Hydrolyzes the pyrophosphate bond of UDP-2,3-diacylglucosamine to yield 2,3-diacylglucosamine 1-phosphate (lipid X) and UMP by catalyzing the attack of water at the alpha-P atom. Involved in the biosynthesis of lipid A, a phosphorylated glycolipid that anchors the lipopolysaccharide to the outer membrane of the cell. The polypeptide is UDP-2,3-diacylglucosamine hydrolase (Wigglesworthia glossinidia brevipalpis).